The chain runs to 146 residues: Horcolin (146 aa).

Residues 1-21 (MSKPVKIGPWGGNGGSERDVQ) are disordered. One can recognise a Jacalin-type lectin domain in the interval 4–146 (PVKIGPWGGN…LDAIGFYITP (143 aa)).

This sequence belongs to the jacalin lectin family.

It localises to the secreted. The protein localises to the extracellular space. It is found in the apoplast. Mannose-specific lectin. Has a weak agglutinating activity against rabbit erythrocytes. The polypeptide is Horcolin (Hordeum vulgare (Barley)).